Reading from the N-terminus, the 634-residue chain is Acetylcholinesterase (634 aa).

Positions 1–23 (MKTSDILLLPTVLLTFLFHNCFA) are cleaved as a signal peptide. Cys-91 and Cys-118 are joined by a disulfide. N-linked (GlcNAc...) asparagine glycosylation is found at Asn-133 and Asn-184. Ser-225 (acyl-ester intermediate) is an active-site residue. A disulfide bond links Cys-279 and Cys-290. Asn-283 carries N-linked (GlcNAc...) asparagine glycosylation. The Charge relay system role is filled by Glu-352. Asn-368 carries an N-linked (GlcNAc...) asparagine glycan. Cys-427 and Cys-580 are oxidised to a cystine. The Charge relay system role is filled by His-495. Asn-512 and Asn-592 each carry an N-linked (GlcNAc...) asparagine glycan.

This sequence belongs to the type-B carboxylesterase/lipase family. In terms of assembly, dimers and collagen-tailed forms, in which catalytic tetramers are associated with anchoring proteins that attach them to the basal lamina or to cell membranes. In the collagen-tailed forms, subunits are associated with a specific collagen, COLQ, which triggers the formation of isoform T tetramers from dimers.

The protein localises to the synapse. The protein resides in the secreted. It localises to the cell membrane. The catalysed reaction is acetylcholine + H2O = choline + acetate + H(+). Its function is as follows. Terminates signal transduction at the neuromuscular junction by rapid hydrolysis of the acetylcholine released into the synaptic cleft. In Danio rerio (Zebrafish), this protein is Acetylcholinesterase (ache).